Consider the following 312-residue polypeptide: Probable HTH-type transcriptional regulator LrhA (312 aa).

In terms of domain architecture, HTH lysR-type spans 11–68 (LDLDLLRTFVAVADLNTFAAAAAAVCRTQSAVSQQMQRLEQLVGKELFARHGRNKLLT). Residues 28-47 (FAAAAAAVCRTQSAVSQQMQ) constitute a DNA-binding region (H-T-H motif).

It belongs to the LysR transcriptional regulatory family.

Not known, does not seem to act on the proton translocating NADH dehydrogenase genes (nuoA-N) which are part of the lrhA operon. In Escherichia coli (strain K12), this protein is Probable HTH-type transcriptional regulator LrhA (lrhA).